A 382-amino-acid chain; its full sequence is Enoyl-[acyl-carrier-protein] reductase, mitochondrial (382 aa).

The N-terminal 17 residues, M1–M17, are a transit peptide targeting the mitochondrion. Residue Y77 is the Proton donor of the active site. NADP(+)-binding positions include N159, T187–V190, R210–R212, Y285–M288, F310–V312, and K375.

Belongs to the zinc-containing alcohol dehydrogenase family. Quinone oxidoreductase subfamily. In terms of assembly, homodimer.

It is found in the mitochondrion matrix. It carries out the reaction a 2,3-saturated acyl-[ACP] + NADP(+) = a (2E)-enoyl-[ACP] + NADPH + H(+). Catalyzes the NADPH-dependent reduction of trans-2-enoyl thioesters in mitochondrial fatty acid synthesis (fatty acid synthesis type II). Fatty acid chain elongation in mitochondria uses acyl carrier protein (ACP) as an acyl group carrier, but the enzyme accepts both ACP and CoA thioesters as substrates in vitro. Required for respiration and the maintenance of the mitochondrial compartment. The chain is Enoyl-[acyl-carrier-protein] reductase, mitochondrial (ETR1) from Kluyveromyces lactis (strain ATCC 8585 / CBS 2359 / DSM 70799 / NBRC 1267 / NRRL Y-1140 / WM37) (Yeast).